A 568-amino-acid polypeptide reads, in one-letter code: Dual specificity tyrosine-phosphorylation-regulated kinase 3 (568 aa).

The tract at residues 1-168 (MKWKEKLGDG…HGVIGGPNNG (168 aa)) is disordered. Positions 77 to 114 (SNTVQSDGISDSEKCSPTVSQGKSSDCLNTVKSNSSSK) are enriched in polar residues. The Protein kinase domain occupies 189-502 (YEVLKIIGKG…PAQALRHPWI (314 aa)). ATP contacts are provided by residues 195–203 (IGKGSFGQV) and Lys-218. Asp-315 acts as the Proton acceptor in catalysis. Ser-330 bears the Phosphoserine mark. Tyr-349 carries the phosphotyrosine modification. The Nuclear localization signal motif lies at 448–461 (RSRRGKKRGPPGSK).

This sequence belongs to the protein kinase superfamily. CMGC Ser/Thr protein kinase family. MNB/DYRK subfamily. Interacts with SIRT1. Mg(2+) serves as cofactor. In terms of processing, protein kinase activity is activated following autophosphorylation at Tyr-349. Autophosphorylation at Ser-330 stabilizes the protein and enhances the protein kinase activity. Ubiquitinated at anaphase by the anaphase-promoting complex (APC/C), leading to its degradation by the proteasome.

It localises to the nucleus. It is found in the cytoplasm. Its subcellular location is the nucleus speckle. The protein resides in the cytoplasmic granule. The protein localises to the cytoskeleton. It localises to the microtubule organizing center. It is found in the centrosome. The catalysed reaction is L-seryl-[protein] + ATP = O-phospho-L-seryl-[protein] + ADP + H(+). The enzyme catalyses L-threonyl-[protein] + ATP = O-phospho-L-threonyl-[protein] + ADP + H(+). It carries out the reaction L-tyrosyl-[protein] + ATP = O-phospho-L-tyrosyl-[protein] + ADP + H(+). Protein kinase activity is activated following autophosphorylation at Tyr-349. Its function is as follows. Dual-specificity protein kinase that promotes disassembly of several types of membraneless organelles during mitosis, such as stress granules, nuclear speckles and pericentriolar material. Dual-specificity tyrosine-regulated kinases (DYRKs) autophosphorylate a critical tyrosine residue in their activation loop and phosphorylate their substrate on serine and threonine residues. Acts as a central dissolvase of membraneless organelles during the G2-to-M transition, after the nuclear-envelope breakdown: acts by mediating phosphorylation of multiple serine and threonine residues in unstructured domains of proteins, such as SRRM1 and PCM1. Does not mediate disassembly of all membraneless organelles: disassembly of P-body and nucleolus is not regulated by DYRK3. Dissolution of membraneless organelles at the onset of mitosis is also required to release mitotic regulators, such as ZNF207, from liquid-unmixed organelles where they are sequestered and keep them dissolved during mitosis. Regulates mTORC1 by mediating the dissolution of stress granules: during stressful conditions, DYRK3 partitions from the cytosol to the stress granule, together with mTORC1 components, which prevents mTORC1 signaling. When stress signals are gone, the kinase activity of DYRK3 is required for the dissolution of stress granule and mTORC1 relocation to the cytosol: acts by mediating the phosphorylation of the mTORC1 inhibitor AKT1S1, allowing full reactivation of mTORC1 signaling. Also acts as a negative regulator of EPO-dependent erythropoiesis: may place an upper limit on red cell production during stress erythropoiesis. Inhibits cell death due to cytokine withdrawal in hematopoietic progenitor cells. Promotes cell survival upon genotoxic stress through phosphorylation of SIRT1: this in turn inhibits p53/TP53 activity and apoptosis. This Macaca fascicularis (Crab-eating macaque) protein is Dual specificity tyrosine-phosphorylation-regulated kinase 3.